A 599-amino-acid chain; its full sequence is Endoribonuclease ZC3H12A (599 aa).

The interval 1–40 (MSGPCGEKPVLEASPTMSLWEFEDSHSRQGTPRPGQELAA) is disordered. The interval 42 to 87 (EASALELQMKVDFFRKLGYSSTEIHSVLQKLGVQADTNTVLGELVK) is ubiquitin association domain. The tract at residues 81–150 (VLGELVKHGT…DGSNVAMSHG (70 aa)) is necessary for interaction with TANK. The segment at 90–133 (TATERERQTSPDPCPQLPLVPRGGGTPKAPNLEPPLPEEEKEGS) is disordered. Ser-99 is subject to Phosphoserine. The tract at residues 112–297 (GGGTPKAPNL…LDNFLRKKPL (186 aa)) is RNase. The RNase NYN domain maps to 135 to 290 (LRPVVIDGSN…LGRHGPSLDN (156 aa)). The interval 214–220 (RRVGGKR) is RNA binding. Position 226 (Asp-226) interacts with Mg(2+). The segment at 301-324 (HRKQPCPYGRKCTYGIKCRFFHPE) adopts a C3H1-type zinc-finger fold. A necessary for interaction with ZC3H12D region spans residues 301–457 (HRKQPCPYGR…SELWGVRGGG (157 aa)). Positions 343-420 (LSPPRAPSKD…SGSSFGPTDW (78 aa)) are disordered. A Phosphoserine modification is found at Ser-344. A compositionally biased stretch (low complexity) spans 358 to 375 (PSPSSQSSSLLTESEQCS). Residues 386–399 (SPGSRQEGLTQTYA) show a composition bias toward polar residues. A phosphoserine mark is found at Ser-438 and Ser-442. The tract at residues 522-546 (PPPTSVLQEPPVQSPGAGRSPWGRA) is disordered.

The protein belongs to the ZC3H12 family. In terms of assembly, oligomer. Found in a deubiquitination complex with TANK, USP10 and ZC3H12A; this complex inhibits genotoxic stress- or interleukin-1-beta-mediated NF-kappaB activation by promoting IKBKG or TRAF6 deubiquitination. Interacts with IKBKG; this interaction increases in response to DNA damage. Interacts with TANK; this interaction increases in response to DNA damage and serves as a bridge to anchor both TANK and USP10 into a deubiquitinating complex. Interacts with TRAF6; this interaction increases in response to DNA damage and is stimulated by TANK. Interacts with USP10; this interaction increases in response to DNA damage and serves as a bridge to anchor both TANK and USP10 into a deubiquitinating complex. Interacts with ZC3H12D. Interacts with TNRC6A. Interacts with IKBKB/IKKB. Interacts with IKBKB/IKKB. Interacts with BTRC; the interaction occurs when ZC3H12A is phosphorylated in a IKBKB/IKKB-dependent manner. Interacts with IRAK1; this interaction increases the interaction between ZC3H12A and IKBKB/IKKB. Interacts with UPF1; this interaction occurs in a mRNA translationally active- and termination-dependent manner and is essential for ZC3H12A-mediated degradation of target mRNAs. Associates with ribosomes. Interacts with ubiquitin. As to quaternary structure, (Microbial infection) Oligomerization is necessary for antiviral activity. It depends on Mg(2+) as a cofactor. In terms of processing, phosphorylated by IRAK1; phosphorylation is necessary for subsequent phosphorylation by the I-kappa-B-kinase (IKK) complex. Phosphorylated by I-kappa-B-kinase (IKK) subunits IKBKB/IKKB and CHUK/IKKA at Ser-438 and Ser-442; these phosphorylations promote ubiquitin proteasome-mediated degradation of ZC3H12A and hence facilitates rapid and robust production of IL-6 mRNA in response to toll-like receptor (TLR) or IL-1 receptor stimuli. Post-translationally, (Microbial infection) Rapidly degraded in activated T-cells in response to phorbol 13-acetate 12-myristate (PMA) during HIV-1 viral infection. Ubiquitinated; ubiquitination is induced in response to interleukin IL1 receptor stimuli in a IKBKB/IKKB and IRAK1-dependent manner, leading to proteasome-mediated degradation. In terms of processing, proteolytically cleaved between Arg-111 and Arg-214 by MALT1 in activated T-cells; cleavage at Arg-111 is critical for promoting ZC3H12A degradation in response to T-cell receptor (TCR) stimulation, and hence is necessary for prolonging the stability of a set of mRNAs controlling T-cell activation and Th17 cell differentiation. In terms of tissue distribution, expressed in heart, placenta, spleen, kidney, liver and lung. Expressed in leukocytes. Expressed in monocyte.

The protein resides in the nucleus. The protein localises to the cytoplasm. Its subcellular location is the P-body. It localises to the rough endoplasmic reticulum membrane. It is found in the cytoplasmic granule. Endoribonuclease involved in various biological functions such as cellular inflammatory response and immune homeostasis, glial differentiation of neuroprogenitor cells, cell death of cardiomyocytes, adipogenesis and angiogenesis. Functions as an endoribonuclease involved in mRNA decay. Modulates the inflammatory response by promoting the degradation of a set of translationally active cytokine-induced inflammation-related mRNAs, such as IL6 and IL12B, during the early phase of inflammation. Prevents aberrant T-cell-mediated immune reaction by degradation of multiple mRNAs controlling T-cell activation, such as those encoding cytokines (IL6 and IL2), cell surface receptors (ICOS, TNFRSF4 and TNFR2) and transcription factor (REL). Inhibits cooperatively with ZC3H12A the differentiation of helper T cells Th17 in lungs. They repress target mRNA encoding the Th17 cell-promoting factors IL6, ICOS, REL, IRF4, NFKBID and NFKBIZ. The cooperation requires RNA-binding by RC3H1 and the nuclease activity of ZC3H12A. Together with RC3H1, destabilizes TNFRSF4/OX40 mRNA by binding to the conserved stem loop structure in its 3'UTR. Self regulates by destabilizing its own mRNA. Cleaves mRNA harboring a stem-loop (SL), often located in their 3'-UTRs, during the early phase of inflammation in a helicase UPF1-dependent manner. Plays a role in the inhibition of microRNAs (miRNAs) biogenesis. Cleaves the terminal loop of a set of precursor miRNAs (pre-miRNAs) important for the regulation of the inflammatory response leading to their degradation, and thus preventing the biosynthesis of mature miRNAs. Also plays a role in promoting angiogenesis in response to inflammatory cytokines by inhibiting the production of antiangiogenic microRNAs via its anti-dicer RNase activity. Affects the overall ubiquitination of cellular proteins. Positively regulates deubiquitinase activity promoting the cleavage at 'Lys-48'- and 'Lys-63'-linked polyubiquitin chains on TNF receptor-associated factors (TRAFs), preventing JNK and NF-kappa-B signaling pathway activation, and hence negatively regulating macrophage-mediated inflammatory response and immune homeostasis. Also induces deubiquitination of the transcription factor HIF1A, probably leading to its stabilization and nuclear import, thereby positively regulating the expression of proangiogenic HIF1A-targeted genes. Involved in a TANK-dependent negative feedback response to attenuate NF-kappaB activation through the deubiquitination of IKBKG or TRAF6 in response to interleukin-1-beta (IL1B) stimulation or upon DNA damage. Prevents stress granule (SGs) formation and promotes macrophage apoptosis under stress conditions, including arsenite-induced oxidative stress, heat shock and energy deprivation. Plays a role in the regulation of macrophage polarization; promotes IL4-induced polarization of macrophages M1 into anti-inflammatory M2 state. May also act as a transcription factor that regulates the expression of multiple genes involved in inflammatory response, angiogenesis, adipogenesis and apoptosis. Functions as a positive regulator of glial differentiation of neuroprogenitor cells through an amyloid precursor protein (APP)-dependent signaling pathway. Attenuates septic myocardial contractile dysfunction in response to lipopolysaccharide (LPS) by reducing I-kappa-B-kinase (IKK)-mediated NF-kappa-B activation, and hence myocardial pro-inflammatory cytokine production. In terms of biological role, (Microbial infection) Binds to Japanese encephalitis virus (JEV) and Dengue virus (DEN) RNAs. Its function is as follows. (Microbial infection) Exhibits antiviral activity against HIV-1 in lymphocytes by decreasing the abundance of HIV-1 viral RNA species. In Homo sapiens (Human), this protein is Endoribonuclease ZC3H12A.